A 466-amino-acid polypeptide reads, in one-letter code: Acetyl-coenzyme A carboxylase carboxyl transferase subunit beta, chloroplastic (466 aa).

The CoA carboxyltransferase N-terminal domain occupies 198–466 (LWIQCENCYE…FPLNQNSIGQ (269 aa)). Residues cysteine 202, cysteine 205, cysteine 221, and cysteine 224 each contribute to the Zn(2+) site. Residues 202–224 (CENCYELNYKKLLKSKMRICDEC) form a C4-type zinc finger.

This sequence belongs to the AccD/PCCB family. In terms of assembly, acetyl-CoA carboxylase is a heterohexamer composed of biotin carboxyl carrier protein, biotin carboxylase and 2 subunits each of ACCase subunit alpha and ACCase plastid-coded subunit beta (accD). Zn(2+) serves as cofactor.

It localises to the plastid. The protein resides in the chloroplast stroma. The enzyme catalyses N(6)-carboxybiotinyl-L-lysyl-[protein] + acetyl-CoA = N(6)-biotinyl-L-lysyl-[protein] + malonyl-CoA. Its pathway is lipid metabolism; malonyl-CoA biosynthesis; malonyl-CoA from acetyl-CoA: step 1/1. Component of the acetyl coenzyme A carboxylase (ACC) complex. Biotin carboxylase (BC) catalyzes the carboxylation of biotin on its carrier protein (BCCP) and then the CO(2) group is transferred by the transcarboxylase to acetyl-CoA to form malonyl-CoA. The chain is Acetyl-coenzyme A carboxylase carboxyl transferase subunit beta, chloroplastic from Fagopyrum esculentum subsp. ancestrale (Wild buckwheat).